A 199-amino-acid polypeptide reads, in one-letter code: Ribonuclease HII (199 aa).

Residues 10-199 (HLVAGVDEVG…VKRALGLASN (190 aa)) form the RNase H type-2 domain. A divalent metal cation is bound by residues Asp16, Glu17, and Asp108.

The protein belongs to the RNase HII family. It depends on Mn(2+) as a cofactor. Mg(2+) is required as a cofactor.

Its subcellular location is the cytoplasm. It carries out the reaction Endonucleolytic cleavage to 5'-phosphomonoester.. Functionally, endonuclease that specifically degrades the RNA of RNA-DNA hybrids. This chain is Ribonuclease HII, found in Klebsiella pneumoniae (strain 342).